Reading from the N-terminus, the 484-residue chain is MITTNAKKMMNHIDGEWVNSLGAESEEVVNPANGNVIAYAPLSVRADVDRAVQAAKHAYQTWSLVPVPNRARLLYKYLQLLQEQKEQLADIITTENGKTLKDARGEVQRGIEVVELATATPTLMMGESLPAIAGGIDGSIWRYPLGVVAGITPFNFPMMVPLWMFPLAIACGNTFVLKPSERTPILAGKLVELFYEAGFPKGVLNLVHGGKDVVNGILENDDIKAVSFVGSEPVAKYVYQTGTANGKRVQALAGAKNHAIVMPDCHLEKTVQGIIGAAFGSSGERCMACSVAAVVDDIADDFMEMLVSETRKLKTGDGRSEDHFVGPLIREVHKQRVLDYIDSGIKEGAALAVDGRNPDVREGYFVGATIFDHVTPEMKIWQDEIFAPVLSVVRVQDLDEGIELANQSKFANGAVIYTSSGKSAQQFRDKIDAGMIGVNVNVPAPMAFFSFAGNKASFYGDLGTNGKDGVQFYTRKKVVTERWF.

5 residues coordinate NAD(+): Phe154, Lys178, Glu181, Arg182, and Ser231. The active-site Nucleophile is the Cys286. Position 384 (Glu384) interacts with NAD(+).

This sequence belongs to the aldehyde dehydrogenase family. IolA subfamily. Homotetramer.

The catalysed reaction is 3-oxopropanoate + NAD(+) + CoA + H2O = hydrogencarbonate + acetyl-CoA + NADH + H(+). It catalyses the reaction 2-methyl-3-oxopropanoate + NAD(+) + CoA + H2O = propanoyl-CoA + hydrogencarbonate + NADH + H(+). Its pathway is polyol metabolism; myo-inositol degradation into acetyl-CoA; acetyl-CoA from myo-inositol: step 7/7. In terms of biological role, catalyzes the oxidation of malonate semialdehyde (MSA) and methylmalonate semialdehyde (MMSA) into acetyl-CoA and propanoyl-CoA, respectively. Is involved in a myo-inositol catabolic pathway. Bicarbonate, and not CO2, is the end-product of the enzymatic reaction. The sequence is that of Malonate-semialdehyde dehydrogenase 1 from Bacillus licheniformis (strain ATCC 14580 / DSM 13 / JCM 2505 / CCUG 7422 / NBRC 12200 / NCIMB 9375 / NCTC 10341 / NRRL NRS-1264 / Gibson 46).